The chain runs to 116 residues: Large ribosomal subunit protein bL19 (116 aa).

This sequence belongs to the bacterial ribosomal protein bL19 family.

In terms of biological role, this protein is located at the 30S-50S ribosomal subunit interface and may play a role in the structure and function of the aminoacyl-tRNA binding site. The chain is Large ribosomal subunit protein bL19 from Syntrophomonas wolfei subsp. wolfei (strain DSM 2245B / Goettingen).